The primary structure comprises 173 residues: Shikimate kinase (173 aa).

ATP is bound at residue 10 to 15 (GSGKTT). Mg(2+) is bound at residue Thr-14. Substrate contacts are provided by Asp-32, Arg-56, and Gly-78. Arg-117 lines the ATP pocket. Residue Arg-135 participates in substrate binding.

The protein belongs to the shikimate kinase family. In terms of assembly, monomer. It depends on Mg(2+) as a cofactor.

It is found in the cytoplasm. The catalysed reaction is shikimate + ATP = 3-phosphoshikimate + ADP + H(+). Its pathway is metabolic intermediate biosynthesis; chorismate biosynthesis; chorismate from D-erythrose 4-phosphate and phosphoenolpyruvate: step 5/7. In terms of biological role, catalyzes the specific phosphorylation of the 3-hydroxyl group of shikimic acid using ATP as a cosubstrate. This Limosilactobacillus fermentum (strain NBRC 3956 / LMG 18251) (Lactobacillus fermentum) protein is Shikimate kinase.